The primary structure comprises 471 residues: Serine/threonine-protein kinase sid1 (471 aa).

A Protein kinase domain is found at Tyr9–Ile260. ATP contacts are provided by residues Leu15–Val23 and Lys38. Asp129 functions as the Proton acceptor in the catalytic mechanism.

This sequence belongs to the protein kinase superfamily. STE Ser/Thr protein kinase family. STE20 subfamily. Interacts with cdc14.

It localises to the cytoplasm. Its subcellular location is the cytoskeleton. The protein localises to the microtubule organizing center. It is found in the spindle pole body. The catalysed reaction is L-seryl-[protein] + ATP = O-phospho-L-seryl-[protein] + ADP + H(+). The enzyme catalyses L-threonyl-[protein] + ATP = O-phospho-L-threonyl-[protein] + ADP + H(+). In terms of biological role, has a role in the septation initiation network (SIN) required for cytokinesis. This is Serine/threonine-protein kinase sid1 (sid1) from Schizosaccharomyces pombe (strain 972 / ATCC 24843) (Fission yeast).